A 565-amino-acid polypeptide reads, in one-letter code: Protein NRT1/ PTR FAMILY 5.15 (565 aa).

The next 2 membrane-spanning stretches (helical) occupy residues 49–67 and 80–100; these read FAYFGIACNLITYLTGPLG and WSGTASILPILGAFVADAYLG. T104 carries the post-translational modification Phosphothreonine. Transmembrane regions (helical) follow at residues 110 to 130, 142 to 162, 189 to 209, 217 to 237, 331 to 351, 368 to 388, 409 to 429, 454 to 474, 490 to 510, and 534 to 554; these read LIYILGLGLLTLSASLIIMGL, SIWVNTLFFCSLYLVAIGQGG, FFNWWFLSLSAGISISIIVVA, WAFGFGIPCLFMVMALAIFLL, IPIWITYVVSTIPYAQYITFF, IPAASLLSFVGVSILISVPLY, LQRIGAGMVLSVFNMMLAALV, IWWFVPQYLLLGMIDLFSMVG, IGLSLSLSAMGLSSFLSGFLI, and YFYWLLAAFTAIAFFAFLFIS.

The protein belongs to the major facilitator superfamily. Proton-dependent oligopeptide transporter (POT/PTR) (TC 2.A.17) family. In terms of tissue distribution, expressed in shoots, roots and leaves.

It localises to the membrane. The sequence is that of Protein NRT1/ PTR FAMILY 5.15 (NPF5.15) from Arabidopsis thaliana (Mouse-ear cress).